The primary structure comprises 564 residues: Copine-8 (564 aa).

C2 domains follow at residues 1–133 (MDSR…RLEK) and 142–265 (KCGT…FNVY). The Ca(2+) site is built by Asp39, Asp45, Asp99, Asp101, Ser104, Lys109, Asp111, Asp173, Asp179, Asp235, Asp237, and Asp243. Residue Ser260 is modified to Phosphoserine. The region spanning 309-510 (NFTVAIDFTA…VQFVPFRDYI (202 aa)) is the VWFA domain.

This sequence belongs to the copine family. The cofactor is Ca(2+).

Its function is as follows. Probable calcium-dependent phospholipid-binding protein that may play a role in calcium-mediated intracellular processes. In Homo sapiens (Human), this protein is Copine-8.